Reading from the N-terminus, the 322-residue chain is Beta-ketoacyl-[acyl-carrier-protein] synthase III (322 aa).

Catalysis depends on residues Cys112 and His249. The tract at residues 250–254 is ACP-binding; it reads QANQR. The active site involves Asn279.

Belongs to the thiolase-like superfamily. FabH family. Homodimer.

The protein localises to the cytoplasm. The enzyme catalyses malonyl-[ACP] + acetyl-CoA + H(+) = 3-oxobutanoyl-[ACP] + CO2 + CoA. Its pathway is lipid metabolism; fatty acid biosynthesis. Its function is as follows. Catalyzes the condensation reaction of fatty acid synthesis by the addition to an acyl acceptor of two carbons from malonyl-ACP. Catalyzes the first condensation reaction which initiates fatty acid synthesis and may therefore play a role in governing the total rate of fatty acid production. Possesses both acetoacetyl-ACP synthase and acetyl transacylase activities. Its substrate specificity determines the biosynthesis of branched-chain and/or straight-chain of fatty acids. This Caulobacter vibrioides (strain ATCC 19089 / CIP 103742 / CB 15) (Caulobacter crescentus) protein is Beta-ketoacyl-[acyl-carrier-protein] synthase III.